Consider the following 1083-residue polypeptide: Carbamoyl phosphate synthase large chain (1083 aa).

The segment at 1 to 402 is carboxyphosphate synthetic domain; that stretch reads MPKRTDIRKV…AYMKALRSME (402 aa). Residues Arg129, Arg169, Gly175, Gly176, Glu208, Val210, Glu215, Gly241, Val242, His243, Gln285, and Glu299 each coordinate ATP. An ATP-grasp 1 domain is found at 133–328; that stretch reads KAAMQKIGVA…IAKIAAKLAL (196 aa). Residues Gln285, Glu299, and Asn301 each contribute to the Mg(2+) site. Positions 285, 299, and 301 each coordinate Mn(2+). The interval 403–554 is oligomerization domain; it reads LGRVGLESPE…YSTYEEEDEA (152 aa). The segment at 555–937 is carbamoyl phosphate synthetic domain; it reads PPTDRQKVLI…AFAKSQLAAG (383 aa). The 193-residue stretch at 679–871 folds into the ATP-grasp 2 domain; sequence AALIEKLGLK…MAKIAALCMV (193 aa). ATP contacts are provided by Arg715, Arg754, Leu756, Glu761, Gly787, Val788, His789, Ser790, Gln830, and Glu842. Gln830, Glu842, and Asn844 together coordinate Mg(2+). Mn(2+)-binding residues include Gln830, Glu842, and Asn844. Residues 938 to 1078 enclose the MGS-like domain; it reads VKLPKSGKVF…QEYLGINAAP (141 aa). Residues 938–1083 are allosteric domain; sequence VKLPKSGKVF…INAAPPGTRR (146 aa).

This sequence belongs to the CarB family. Composed of two chains; the small (or glutamine) chain promotes the hydrolysis of glutamine to ammonia, which is used by the large (or ammonia) chain to synthesize carbamoyl phosphate. Tetramer of heterodimers (alpha,beta)4. Mg(2+) is required as a cofactor. The cofactor is Mn(2+).

It carries out the reaction hydrogencarbonate + L-glutamine + 2 ATP + H2O = carbamoyl phosphate + L-glutamate + 2 ADP + phosphate + 2 H(+). It catalyses the reaction hydrogencarbonate + NH4(+) + 2 ATP = carbamoyl phosphate + 2 ADP + phosphate + 2 H(+). It functions in the pathway amino-acid biosynthesis; L-arginine biosynthesis; carbamoyl phosphate from bicarbonate: step 1/1. Its pathway is pyrimidine metabolism; UMP biosynthesis via de novo pathway; (S)-dihydroorotate from bicarbonate: step 1/3. Large subunit of the glutamine-dependent carbamoyl phosphate synthetase (CPSase). CPSase catalyzes the formation of carbamoyl phosphate from the ammonia moiety of glutamine, carbonate, and phosphate donated by ATP, constituting the first step of 2 biosynthetic pathways, one leading to arginine and/or urea and the other to pyrimidine nucleotides. The large subunit (synthetase) binds the substrates ammonia (free or transferred from glutamine from the small subunit), hydrogencarbonate and ATP and carries out an ATP-coupled ligase reaction, activating hydrogencarbonate by forming carboxy phosphate which reacts with ammonia to form carbamoyl phosphate. This chain is Carbamoyl phosphate synthase large chain, found in Myxococcus xanthus (strain DK1622).